The following is a 275-amino-acid chain: N-acetyltransferase YodP (275 aa).

Residues 125-271 form the N-acetyltransferase domain; sequence FTMRKAETND…AEGLENMNIW (147 aa).

Belongs to the acetyltransferase family.

It carries out the reaction (3S)-3,6-diaminohexanoate + acetyl-CoA = (3S)-6-acetamido-3-aminohexanoate + CoA + H(+). Its function is as follows. In vitro, is able to catalyze the acetylation of beta-lysine to N6-acetyl-beta-lysine, an archaeal osmolyte produced by methanogenic archaea. Its physiological function has not yet been elucidated. The chain is N-acetyltransferase YodP (yodP) from Bacillus subtilis (strain 168).